The primary structure comprises 266 residues: Early E1A protein (266 aa).

Residues 39–47 (MSLHEMYDL) form an interaction with RB1 in competition with E2F1 region. Positions 94–98 (PELQP) match the PXLXP motif, interaction with host ZMYND11 motif. The LXCXE motif, interaction with host RB1 motif lies at 103–107 (LFCYE). A zinc finger spans residues 160 to 180 (CSSCDYHRKTSGCPEILCSLC). Residues 193–244 (VSDSEPDEPDSTTADSNHGSPPTLRCTPPRDLPRPVPVKASPGKRPAVNSLH) are disordered. Residues 203-212 (STTADSNHGS) are compositionally biased toward polar residues. A PXDLS motif, CTBP-binding motif is present at residues 255-259 (PLDLS). A Nuclear localization signal motif is present at residues 261-265 (KRSRS).

This sequence belongs to the adenoviridae E1A protein family. Interacts with host UBE2I; this interaction interferes with polySUMOylation. Interacts with host RB1; this interaction induces the aberrant dissociation of RB1-E2F1 complex thereby disrupting the activity of RB1 and activating E2F1-regulated genes. Interacts with host ATF7; the interaction enhances ATF7-mediated viral transactivation activity which requires the zinc binding domains of both proteins. Isoform early E1A 32 kDa protein and isoform early E1A 26 kDa protein interact (via N-terminus) with CUL1 and E3 ubiquitin ligase RBX1; these interactions inhibit RBX1-CUL1-dependent elongation reaction of ubiquitin chains and attenuate ubiquitination of SCF(FBXW7) target proteins. Interacts (via PXLXP motif) with host ZMYND11/BS69 (via MYND-type zinc finger); this interaction inhibits E1A mediated transactivation. Interacts with host EP300; this interaction stimulates the acetylation of RB1 by recruiting EP300 and RB1 into a multimeric-protein complex. Interacts with host CTBP1 and CTBP2; this interaction seems to potentiate viral replication. Interacts with host DCAF7. Interacts with host DYRK1A. Interacts with host KPNA4; this interaction allows E1A import into the host nucleus. Interacts with host EP400; this interaction stabilizes MYC. Interacts with host TBP protein; this interaction probably disrupts the TBP-TATA complex.

The protein resides in the host nucleus. Functionally, plays a role in viral genome replication by driving entry of quiescent cells into the cell cycle. Stimulation of progression from G1 to S phase allows the virus to efficiently use the cellular DNA replicating machinery to achieve viral genome replication. E1A protein has both transforming and trans-activating activities. Induces the disassembly of the E2F1 transcription factor from RB1 by direct competition for the same binding site on RB1, with subsequent transcriptional activation of E2F1-regulated S-phase genes and of the E2 region of the adenoviral genome. Release of E2F1 leads to the ARF-mediated inhibition of MDM2 and causes TP53/p53 to accumulate because it is not targeted for degradation by MDM2-mediated ubiquitination anymore. This increase in TP53, in turn, would arrest the cell proliferation and direct its death but this effect is counteracted by the viral protein E1B-55K. Inactivation of the ability of RB1 to arrest the cell cycle is critical for cellular transformation, uncontrolled cellular growth and proliferation induced by viral infection. Interaction with RBX1 and CUL1 inhibits ubiquitination of the proteins targeted by SCF(FBXW7) ubiquitin ligase complex, and may be linked to unregulated host cell proliferation. The tumorigenesis-restraining activity of E1A may be related to the disruption of the host CtBP-CtIP complex through the CtBP binding motif. The protein is Early E1A protein of Simian adenovirus serotype 7 (SAdV-7).